Reading from the N-terminus, the 172-residue chain is Cold-inducible RNA-binding protein (172 aa).

The RRM domain maps to 6-84 (GKLFVGGLSF…RQIRVDQAGK (79 aa)). Residues 70 to 172 (KSVDGRQIRV…SYDSYATHNE (103 aa)) are disordered. Gly residues-rich tracts occupy residues 93–105 (YRGG…GFFR) and 114–137 (FSRG…GYGG). A phosphoserine mark is found at Ser130, Ser138, Ser146, Ser156, Ser159, and Ser163. Positions 138–172 (SRDYYASRSQGGSYGYRSSGGSYRDSYDSYATHNE) are enriched in low complexity.

As to quaternary structure, interacts with EIF4G1. Associates with ribosomes. Post-translationally, methylated on arginine residues. Methylation of the RGG motifs is a prerequisite for recruitment into SGs. Phosphorylated by CK2, GSK3A and GSK3B. Phosphorylation by GSK3B increases RNA-binding activity to the TXN 3'-UTR transcript upon exposure to UV radiation. As to expression, ubiquitous.

Its subcellular location is the nucleus. It is found in the nucleoplasm. It localises to the cytoplasm. Cold-inducible mRNA binding protein that plays a protective role in the genotoxic stress response by stabilizing transcripts of genes involved in cell survival. Promotes assembly of stress granules (SGs), when overexpressed. Seems to play an essential role in cold-induced suppression of cell proliferation. Acts as a translational repressor. Acts as a translational activator. Binds specifically to the 3'-untranslated regions (3'-UTRs) of stress-responsive transcripts RPA2 and TXN. This Mus musculus (Mouse) protein is Cold-inducible RNA-binding protein (Cirbp).